A 426-amino-acid chain; its full sequence is Enolase (426 aa).

A (2R)-2-phosphoglycerate-binding site is contributed by Gln-165. Catalysis depends on Glu-209, which acts as the Proton donor. Mg(2+) contacts are provided by Asp-244, Glu-287, and Asp-313. Residues Lys-338, Arg-367, Ser-368, and Lys-389 each coordinate (2R)-2-phosphoglycerate. Catalysis depends on Lys-338, which acts as the Proton acceptor.

The protein belongs to the enolase family. Mg(2+) serves as cofactor.

The protein localises to the cytoplasm. The protein resides in the secreted. It localises to the cell surface. It carries out the reaction (2R)-2-phosphoglycerate = phosphoenolpyruvate + H2O. It participates in carbohydrate degradation; glycolysis; pyruvate from D-glyceraldehyde 3-phosphate: step 4/5. In terms of biological role, catalyzes the reversible conversion of 2-phosphoglycerate (2-PG) into phosphoenolpyruvate (PEP). It is essential for the degradation of carbohydrates via glycolysis. The sequence is that of Enolase from Methanococcus maripaludis (strain C5 / ATCC BAA-1333).